A 130-amino-acid chain; its full sequence is Small ribosomal subunit protein uS9 (130 aa).

The protein belongs to the universal ribosomal protein uS9 family.

This chain is Small ribosomal subunit protein uS9, found in Shigella dysenteriae serotype 1 (strain Sd197).